The sequence spans 431 residues: Serine hydroxymethyltransferase (431 aa).

Residue 122–124 (GHI) participates in (6S)-5,6,7,8-tetrahydrofolate binding. Position 228 is an N6-(pyridoxal phosphate)lysine (K228). E245 contributes to the (6S)-5,6,7,8-tetrahydrofolate binding site.

It belongs to the SHMT family. As to quaternary structure, homodimer. The cofactor is pyridoxal 5'-phosphate.

It is found in the cytoplasm. It participates in amino-acid biosynthesis; glycine biosynthesis; glycine from L-serine: step 1/1. Its function is as follows. Catalyzes the reversible interconversion of serine and glycine with a modified folate serving as the one-carbon carrier. Also exhibits a pteridine-independent aldolase activity toward beta-hydroxyamino acids, producing glycine and aldehydes, via a retro-aldol mechanism. The polypeptide is Serine hydroxymethyltransferase (Thermococcus kodakarensis (strain ATCC BAA-918 / JCM 12380 / KOD1) (Pyrococcus kodakaraensis (strain KOD1))).